Consider the following 178-residue polypeptide: ATP-dependent protease subunit HslV (178 aa).

Thr7 is a catalytic residue. Residues Gly162, Cys165, and Thr168 each coordinate Na(+).

This sequence belongs to the peptidase T1B family. HslV subfamily. In terms of assembly, a double ring-shaped homohexamer of HslV is capped on each side by a ring-shaped HslU homohexamer. The assembly of the HslU/HslV complex is dependent on binding of ATP.

The protein localises to the cytoplasm. It catalyses the reaction ATP-dependent cleavage of peptide bonds with broad specificity.. Allosterically activated by HslU binding. In terms of biological role, protease subunit of a proteasome-like degradation complex believed to be a general protein degrading machinery. The protein is ATP-dependent protease subunit HslV of Paraburkholderia xenovorans (strain LB400).